Reading from the N-terminus, the 397-residue chain is Chorismate synthase (397 aa).

NADP(+) contacts are provided by Arg-40 and Arg-46. FMN contacts are provided by residues 129–131 (RSS), 257–258 (QA), Gly-302, 317–321 (KPISS), and Arg-343.

This sequence belongs to the chorismate synthase family. In terms of assembly, homotetramer. The cofactor is FMNH2.

It carries out the reaction 5-O-(1-carboxyvinyl)-3-phosphoshikimate = chorismate + phosphate. It functions in the pathway metabolic intermediate biosynthesis; chorismate biosynthesis; chorismate from D-erythrose 4-phosphate and phosphoenolpyruvate: step 7/7. Catalyzes the anti-1,4-elimination of the C-3 phosphate and the C-6 proR hydrogen from 5-enolpyruvylshikimate-3-phosphate (EPSP) to yield chorismate, which is the branch point compound that serves as the starting substrate for the three terminal pathways of aromatic amino acid biosynthesis. This reaction introduces a second double bond into the aromatic ring system. This is Chorismate synthase from Pelodictyon phaeoclathratiforme (strain DSM 5477 / BU-1).